A 189-amino-acid chain; its full sequence is Elongation factor P (189 aa).

Belongs to the elongation factor P family.

Its subcellular location is the cytoplasm. The protein operates within protein biosynthesis; polypeptide chain elongation. In terms of biological role, involved in peptide bond synthesis. Stimulates efficient translation and peptide-bond synthesis on native or reconstituted 70S ribosomes in vitro. Probably functions indirectly by altering the affinity of the ribosome for aminoacyl-tRNA, thus increasing their reactivity as acceptors for peptidyl transferase. This Orientia tsutsugamushi (strain Ikeda) (Rickettsia tsutsugamushi) protein is Elongation factor P.